The sequence spans 644 residues: Replication protein E1 (644 aa).

A Nuclear localization signal motif is present at residues lysine 86 to lysine 88. The disordered stretch occupies residues glutamine 146–aspartate 177. The span at serine 159–glutamate 173 shows a compositional bias: low complexity. The interval cysteine 179–aspartate 345 is DNA-binding region. One can recognise an SF3 helicase domain in the interval isoleucine 444–valine 594. Glycine 470 to serine 477 lines the ATP pocket. A Glycyl lysine isopeptide (Lys-Gly) (interchain with G-Cter in SUMO) cross-link involves residue lysine 551.

The protein belongs to the papillomaviridae E1 protein family. In terms of assembly, can form hexamers. Interacts with E2 protein; this interaction increases E1 DNA binding specificity. Interacts with host DNA polymerase subunit POLA2. Interacts with host single stranded DNA-binding protein RPA1. Interacts with host TOP1; this interaction stimulates the enzymatic activity of TOP1. Post-translationally, phosphorylated. Sumoylated.

Its subcellular location is the host nucleus. The enzyme catalyses Couples ATP hydrolysis with the unwinding of duplex DNA by translocating in the 3'-5' direction.. It carries out the reaction ATP + H2O = ADP + phosphate + H(+). ATP-dependent DNA 3'-5' helicase required for initiation of viral DNA replication. It forms a complex with the viral E2 protein. The E1-E2 complex binds to the replication origin which contains binding sites for both proteins. During the initial step, a dimer of E1 interacts with a dimer of protein E2 leading to a complex that binds the viral origin of replication with high specificity. Then, a second dimer of E1 displaces the E2 dimer in an ATP-dependent manner to form the E1 tetramer. Following this, two E1 monomers are added to each half of the site, which results in the formation of two E1 trimers on the viral ori. Subsequently, two hexamers will be created. The double hexamer acts as a bi-directional helicase machinery and unwinds the viral DNA and then recruits the host DNA polymerase to start replication. This Homo sapiens (Human) protein is Replication protein E1.